A 489-amino-acid polypeptide reads, in one-letter code: Mitochondrial distribution and morphology protein 34 (489 aa).

Positions M1 to Q205 constitute an SMP-LTD domain.

Belongs to the MDM34 family. As to quaternary structure, component of the ER-mitochondria encounter structure (ERMES) or MDM complex, composed of MMM1, MDM10, MDM12 and MDM34.

The protein resides in the mitochondrion outer membrane. In terms of biological role, component of the ERMES/MDM complex, which serves as a molecular tether to connect the endoplasmic reticulum (ER) and mitochondria. Components of this complex are involved in the control of mitochondrial shape and protein biogenesis, and function in nonvesicular lipid trafficking between the ER and mitochondria. MDM34 is required for the interaction of the ER-resident membrane protein MMM1 and the outer mitochondrial membrane-resident beta-barrel protein MDM10. In Komagataella phaffii (strain GS115 / ATCC 20864) (Yeast), this protein is Mitochondrial distribution and morphology protein 34.